The chain runs to 144 residues: Large ribosomal subunit protein uL15 (144 aa).

The interval 1–57 (MLLNTLSPAAGSKHAPKRLGRGVGSGLGKTGGRGHKGQKSRSGGKVRPGFEGGQMPL) is disordered. Residues 21 to 31 (RGVGSGLGKTG) are compositionally biased toward gly residues. Residues 32–44 (GRGHKGQKSRSGG) show a composition bias toward basic residues.

This sequence belongs to the universal ribosomal protein uL15 family. As to quaternary structure, part of the 50S ribosomal subunit.

In terms of biological role, binds to the 23S rRNA. This is Large ribosomal subunit protein uL15 from Vibrio cholerae serotype O1 (strain ATCC 39315 / El Tor Inaba N16961).